A 33-amino-acid chain; its full sequence is Photosystem II reaction center protein T (33 aa).

The helical transmembrane segment at 3–23 threads the bilayer; the sequence is ALVYTFLLVSTLGIIFFAIFF.

It belongs to the PsbT family. In terms of assembly, PSII is composed of 1 copy each of membrane proteins PsbA, PsbB, PsbC, PsbD, PsbE, PsbF, PsbH, PsbI, PsbJ, PsbK, PsbL, PsbM, PsbT, PsbY, PsbZ, Psb30/Ycf12, at least 3 peripheral proteins of the oxygen-evolving complex and a large number of cofactors. It forms dimeric complexes.

Its subcellular location is the plastid. The protein resides in the chloroplast thylakoid membrane. Its function is as follows. Found at the monomer-monomer interface of the photosystem II (PS II) dimer, plays a role in assembly and dimerization of PSII. PSII is a light-driven water plastoquinone oxidoreductase, using light energy to abstract electrons from H(2)O, generating a proton gradient subsequently used for ATP formation. The chain is Photosystem II reaction center protein T from Arabidopsis thaliana (Mouse-ear cress).